A 651-amino-acid polypeptide reads, in one-letter code: Endo-1,4-beta-xylanase A (651 aa).

The first 30 residues, 1–30 (MKRKVKKMAAMATSIIMAIMIILHSIPVLA), serve as a signal peptide directing secretion. Residues 33–227 (IIYDNETGTH…SSGYANVYKN (195 aa)) form the GH11 domain. Catalysis depends on Glu-124, which acts as the Nucleophile. Glu-214 (proton donor) is an active-site residue. CBM6 domains follow at residues 250–370 (SIIE…FIFS), 387–507 (SIIQ…FVFT), and 527–647 (SNIQ…FVFS). Ca(2+)-binding residues include Glu-253 and Glu-255. Thr-270 is a D-xylotriose binding site. Arg-275 contacts Ca(2+). The stretch at 278 to 339 (GYIENGNTVT…SSTGSWNTYQ (62 aa)) is repeat 1. Positions 278–616 (GYIENGNTVT…GSTGSFDTYR (339 aa)) are 3 X 61 AA approximate repeats. Residues Tyr-279, Asn-336, and Asn-363 each contribute to the D-xylotriose site. Residues Tyr-279, Asn-336, and Asn-363 each coordinate D-xylobiose. Asp-365 is a Ca(2+) binding site. Copy 2 of the repeat occupies 415 to 476 (GYIENGYSTT…PSTNSWDSYQ (62 aa)). Gln-530, Glu-532, and Ser-552 together coordinate Ca(2+). Repeat unit 3 spans residues 555-616 (GYIENGYSTT…GSTGSFDTYR (62 aa)). Positions 556, 613, and 640 each coordinate D-xylotriose. Asp-642 serves as a coordination point for Ca(2+).

This sequence belongs to the glycosyl hydrolase 11 (cellulase G) family.

It localises to the secreted. The enzyme catalyses Endohydrolysis of (1-&gt;4)-beta-D-xylosidic linkages in xylans.. It functions in the pathway glycan degradation; xylan degradation. Its function is as follows. Endoxylanase that degrades arabinoxylan and glucuronoxylan to xylobiose and xylotriose (in vitro). The chain is Endo-1,4-beta-xylanase A (xynA) from Thermoclostridium stercorarium (Clostridium stercorarium).